The following is a 259-amino-acid chain: MLLCIDTGNTNTVFSVWDGEKFVGLWRISTDHRRTADEYFVWLSTLISLQKLELNIDACIISSTAPRVVFNLRVLCNRYFDTRPLVVGKPDCLLPVAPRVDFGTVVGPDRLVNTWGAFERHGPDLIVVDFGTATTFDVVDTDGAYVGGVIAPGVNLSLEALHMGAASLPHVDVTMPAKVIGTNTVACIQSGIFWGYIGLVQGVVDKIRLERGRPMKVIATGGLAPLFDQGFDLFDAIEDDLTMHGLRLIHDYNKEMGNG.

Residue 6 to 13 (DTGNTNTV) coordinates ATP. 107–110 (GPDR) is a binding site for substrate. Asp109 (proton acceptor) is an active-site residue. Asp129 is a K(+) binding site. Thr132 lines the ATP pocket. Thr184 serves as a coordination point for substrate.

Belongs to the type III pantothenate kinase family. Homodimer. Requires NH4(+) as cofactor. K(+) serves as cofactor.

It is found in the cytoplasm. It carries out the reaction (R)-pantothenate + ATP = (R)-4'-phosphopantothenate + ADP + H(+). It functions in the pathway cofactor biosynthesis; coenzyme A biosynthesis; CoA from (R)-pantothenate: step 1/5. Catalyzes the phosphorylation of pantothenate (Pan), the first step in CoA biosynthesis. The sequence is that of Type III pantothenate kinase from Paracoccus denitrificans (strain Pd 1222).